The chain runs to 154 residues: Small ribosomal subunit protein uS7c (154 aa).

The protein belongs to the universal ribosomal protein uS7 family. Part of the 30S ribosomal subunit.

It localises to the plastid. The protein resides in the chloroplast. Its function is as follows. One of the primary rRNA binding proteins, it binds directly to 16S rRNA where it nucleates assembly of the head domain of the 30S subunit. This is Small ribosomal subunit protein uS7c (rps7) from Pleurastrum terricola (Filamentous green alga).